A 533-amino-acid chain; its full sequence is Calcineurin-interacting protein 3 (533 aa).

Disordered stretches follow at residues 1-30 (MRSL…NMDI), 53-85 (PRKQ…YTKR), and 359-404 (MDMS…LTLP). Residues 61-85 (KRAEPVSEEHRKKESSKNSREYTKR) are compositionally biased toward basic and acidic residues. The span at 359-372 (MDMSQTLSPEQTLS) shows a compositional bias: polar residues. The segment covering 373-384 (PREKLQVQDRKI) has biased composition (basic and acidic residues).

It is found in the nucleus. In Caenorhabditis elegans, this protein is Calcineurin-interacting protein 3.